The sequence spans 43 residues: DeltaKappa-actitoxin-Avd4b (43 aa).

Intrachain disulfides connect Cys-4/Cys-39, Cys-6/Cys-32, and Cys-22/Cys-40.

Belongs to the sea anemone type 3 (BDS) potassium channel toxin family.

The protein resides in the secreted. It localises to the nematocyst. Functionally, acts as a gating modifier on both Kv and Nav ion channels. Voltage-dependently inhibits voltage-gated potassium channels Kv3 (Kv3.1/KCNC1, Kv3.2/KCNC2 and Kv3.4/KCNC4). Slows inactivation of the voltage-gated sodium channel Nav1.7/SCN9A. Inhibits all Kv3.1, Kv3.2 and Kv3.4 by about 50% when tested at a voltage of +40 mV. May act by binding residues in voltage-sensing domains S3b and S4 of Kv3. Tests have been done on human Nav1.7/SCN9A and rat SCG neurons that mostly carry Nav1.7 channels (EC(50)=300 nM). This toxin also reduces blood pressure. This Anemonia sulcata (Mediterranean snakelocks sea anemone) protein is DeltaKappa-actitoxin-Avd4b.